The primary structure comprises 993 residues: UPF0182 protein Sare_4110 (993 aa).

The next 7 helical transmembrane spans lie at 18–38, 61–81, 110–130, 171–191, 209–229, 260–280, and 283–303; these read IGVL…VQAW, LLLF…NLWL, LGTW…LSAQ, GVAF…HYVF, AHLS…YVLD, ILAY…NAWM, and LVWP…IGGI. Disordered regions lie at residues 892–937 and 974–993; these read QGEK…ADAA and EQAA…SPGG. The segment covering 900–929 has biased composition (pro residues); sequence STPPPSGETPAPTPTPTPTPSSPSVTPPPV. Positions 976–993 are enriched in low complexity; sequence AAGPGSAATPTGSPSPGG.

It belongs to the UPF0182 family.

The protein resides in the cell membrane. The chain is UPF0182 protein Sare_4110 from Salinispora arenicola (strain CNS-205).